The primary structure comprises 440 residues: Xaa-Pro dipeptidase (440 aa).

The Mn(2+) site is built by Asp-241, Asp-252, His-333, Glu-378, and Glu-417.

This sequence belongs to the peptidase M24B family. Bacterial-type prolidase subfamily. Mn(2+) serves as cofactor.

It carries out the reaction Xaa-L-Pro dipeptide + H2O = an L-alpha-amino acid + L-proline. Splits dipeptides with a prolyl residue in the C-terminal position. The chain is Xaa-Pro dipeptidase from Glaesserella parasuis serovar 5 (strain SH0165) (Haemophilus parasuis).